The sequence spans 765 residues: Probable beta-glucosidase M (765 aa).

The first 19 residues, 1 to 19, serve as a signal peptide directing secretion; sequence MHSISALLSLLGGLALSSA. N-linked (GlcNAc...) asparagine glycosylation is found at N24, N71, N93, N126, and N258. Residue D286 is part of the active site. N-linked (GlcNAc...) asparagine glycosylation is found at N314, N321, N432, N519, N541, and N647.

The protein belongs to the glycosyl hydrolase 3 family.

The protein localises to the secreted. The catalysed reaction is Hydrolysis of terminal, non-reducing beta-D-glucosyl residues with release of beta-D-glucose.. It functions in the pathway glycan metabolism; cellulose degradation. In terms of biological role, beta-glucosidases are one of a number of cellulolytic enzymes involved in the degradation of cellulosic biomass. Catalyzes the last step releasing glucose from the inhibitory cellobiose. This Aspergillus niger (strain ATCC MYA-4892 / CBS 513.88 / FGSC A1513) protein is Probable beta-glucosidase M (bglM).